A 42-amino-acid chain; its full sequence is Photosystem I reaction center subunit IX (42 aa).

The helical transmembrane segment at 7–27 (YLSVAPVLSTLWFGILAGLLI) threads the bilayer.

Belongs to the PsaJ family.

The protein localises to the plastid. It localises to the chloroplast thylakoid membrane. May help in the organization of the PsaE and PsaF subunits. This is Photosystem I reaction center subunit IX from Lemna minor (Common duckweed).